A 378-amino-acid polypeptide reads, in one-letter code: Queuine tRNA-ribosyltransferase (378 aa).

Aspartate 90 acts as the Proton acceptor in catalysis. Residues 90-94 (DSGGY), aspartate 152, glutamine 194, and glycine 223 contribute to the substrate site. The RNA binding stretch occupies residues 254-260 (GVGKPED). Residue aspartate 273 is the Nucleophile of the active site. The segment at 278–282 (TRNAR) is RNA binding; important for wobble base 34 recognition. Zn(2+) contacts are provided by cysteine 311, cysteine 313, cysteine 316, and histidine 342.

The protein belongs to the queuine tRNA-ribosyltransferase family. Homodimer. Within each dimer, one monomer is responsible for RNA recognition and catalysis, while the other monomer binds to the replacement base PreQ1. Zn(2+) serves as cofactor.

The enzyme catalyses 7-aminomethyl-7-carbaguanine + guanosine(34) in tRNA = 7-aminomethyl-7-carbaguanosine(34) in tRNA + guanine. It functions in the pathway tRNA modification; tRNA-queuosine biosynthesis. In terms of biological role, catalyzes the base-exchange of a guanine (G) residue with the queuine precursor 7-aminomethyl-7-deazaguanine (PreQ1) at position 34 (anticodon wobble position) in tRNAs with GU(N) anticodons (tRNA-Asp, -Asn, -His and -Tyr). Catalysis occurs through a double-displacement mechanism. The nucleophile active site attacks the C1' of nucleotide 34 to detach the guanine base from the RNA, forming a covalent enzyme-RNA intermediate. The proton acceptor active site deprotonates the incoming PreQ1, allowing a nucleophilic attack on the C1' of the ribose to form the product. After dissociation, two additional enzymatic reactions on the tRNA convert PreQ1 to queuine (Q), resulting in the hypermodified nucleoside queuosine (7-(((4,5-cis-dihydroxy-2-cyclopenten-1-yl)amino)methyl)-7-deazaguanosine). The chain is Queuine tRNA-ribosyltransferase from Aquifex aeolicus (strain VF5).